The primary structure comprises 161 residues: NADH-quinone oxidoreductase subunit I (161 aa).

2 consecutive 4Fe-4S ferredoxin-type domains span residues 52 to 82 (LRRY…IESE) and 92 to 121 (SRYD…ETRV). C62, C65, C68, C72, C101, C104, C107, and C111 together coordinate [4Fe-4S] cluster.

This sequence belongs to the complex I 23 kDa subunit family. In terms of assembly, NDH-1 is composed of 14 different subunits. Subunits NuoA, H, J, K, L, M, N constitute the membrane sector of the complex. The cofactor is [4Fe-4S] cluster.

It localises to the cell inner membrane. The catalysed reaction is a quinone + NADH + 5 H(+)(in) = a quinol + NAD(+) + 4 H(+)(out). Its function is as follows. NDH-1 shuttles electrons from NADH, via FMN and iron-sulfur (Fe-S) centers, to quinones in the respiratory chain. The immediate electron acceptor for the enzyme in this species is believed to be ubiquinone. Couples the redox reaction to proton translocation (for every two electrons transferred, four hydrogen ions are translocated across the cytoplasmic membrane), and thus conserves the redox energy in a proton gradient. In Azoarcus sp. (strain BH72), this protein is NADH-quinone oxidoreductase subunit I.